The sequence spans 350 residues: 4-hydroxy-2-oxovalerate aldolase 2 (350 aa).

Residues 8-260 (ITVHDMTLRD…ETGVDVFKIQ (253 aa)) enclose the Pyruvate carboxyltransferase domain. 16–17 (RD) serves as a coordination point for substrate. Position 17 (Asp-17) interacts with Mn(2+). The active-site Proton acceptor is His-20. Residues Ser-170 and His-199 each coordinate substrate. Mn(2+) is bound by residues His-199 and His-201. Tyr-290 contacts substrate.

Belongs to the 4-hydroxy-2-oxovalerate aldolase family.

The catalysed reaction is (S)-4-hydroxy-2-oxopentanoate = acetaldehyde + pyruvate. The polypeptide is 4-hydroxy-2-oxovalerate aldolase 2 (tesG) (Comamonas testosteroni (Pseudomonas testosteroni)).